A 218-amino-acid polypeptide reads, in one-letter code: Chromophore lyase CpcT/CpeT 1 (218 aa).

It belongs to the CpcT/CpeT biliprotein lyase family.

In terms of biological role, covalently attaches a chromophore to Cys residue(s) of phycobiliproteins. In Synechococcus sp. (strain JA-3-3Ab) (Cyanobacteria bacterium Yellowstone A-Prime), this protein is Chromophore lyase CpcT/CpeT 1.